The sequence spans 342 residues: N-acetyl-gamma-glutamyl-phosphate reductase (342 aa).

Residue Cys149 is part of the active site.

This sequence belongs to the NAGSA dehydrogenase family. Type 1 subfamily.

Its subcellular location is the cytoplasm. The catalysed reaction is N-acetyl-L-glutamate 5-semialdehyde + phosphate + NADP(+) = N-acetyl-L-glutamyl 5-phosphate + NADPH + H(+). The protein operates within amino-acid biosynthesis; L-arginine biosynthesis; N(2)-acetyl-L-ornithine from L-glutamate: step 3/4. Functionally, catalyzes the NADPH-dependent reduction of N-acetyl-5-glutamyl phosphate to yield N-acetyl-L-glutamate 5-semialdehyde. The sequence is that of N-acetyl-gamma-glutamyl-phosphate reductase from Cereibacter sphaeroides (strain KD131 / KCTC 12085) (Rhodobacter sphaeroides).